The following is a 430-amino-acid chain: Enolase (430 aa).

Residue Gln-165 coordinates (2R)-2-phosphoglycerate. Glu-207 serves as the catalytic Proton donor. Asp-244, Glu-287, and Asp-314 together coordinate Mg(2+). Positions 339, 368, 369, and 390 each coordinate (2R)-2-phosphoglycerate. Lys-339 acts as the Proton acceptor in catalysis.

Belongs to the enolase family. As to quaternary structure, component of the RNA degradosome, a multiprotein complex involved in RNA processing and mRNA degradation. Mg(2+) serves as cofactor.

The protein resides in the cytoplasm. The protein localises to the secreted. It localises to the cell surface. It carries out the reaction (2R)-2-phosphoglycerate = phosphoenolpyruvate + H2O. It functions in the pathway carbohydrate degradation; glycolysis; pyruvate from D-glyceraldehyde 3-phosphate: step 4/5. Catalyzes the reversible conversion of 2-phosphoglycerate (2-PG) into phosphoenolpyruvate (PEP). It is essential for the degradation of carbohydrates via glycolysis. The sequence is that of Enolase from Xanthomonas oryzae pv. oryzae (strain MAFF 311018).